We begin with the raw amino-acid sequence, 134 residues long: Transcription antitermination protein NusB (134 aa).

The protein belongs to the NusB family.

Involved in transcription antitermination. Required for transcription of ribosomal RNA (rRNA) genes. Binds specifically to the boxA antiterminator sequence of the ribosomal RNA (rrn) operons. This chain is Transcription antitermination protein NusB, found in Halalkalibacterium halodurans (strain ATCC BAA-125 / DSM 18197 / FERM 7344 / JCM 9153 / C-125) (Bacillus halodurans).